Reading from the N-terminus, the 589-residue chain is tRNA (guanine(26)-N(2))-dimethyltransferase 2 (589 aa).

Positions 9-465 constitute a Trm1 methyltransferase domain; that stretch reads TVIKEGEAEI…APMEVIWDIM (457 aa). Residue arginine 36 coordinates S-adenosyl-L-methionine. The segment at 51–122 is disordered; sequence KQEHEAKSSK…RFAPREPKPP (72 aa). 2 stretches are compositionally biased toward basic and acidic residues: residues 68–81 and 106–122; these read VIEK…KEET and DPAK…PKPP. The S-adenosyl-L-methionine site is built by arginine 134, aspartate 152, and valine 185. Zn(2+)-binding residues include cysteine 315, cysteine 318, cysteine 350, and cysteine 353. The segment at 550–589 is disordered; sequence LSQHHEELKEEDEEAEPEDNVQDKVDPKRQKTATDNITST. Positions 558-569 are enriched in acidic residues; sequence KEEDEEAEPEDN.

This sequence belongs to the class I-like SAM-binding methyltransferase superfamily. Trm1 family.

The enzyme catalyses guanosine(26) in tRNA + 2 S-adenosyl-L-methionine = N(2)-dimethylguanosine(26) in tRNA + 2 S-adenosyl-L-homocysteine + 2 H(+). Dimethylates a single guanine residue at position 26 of most tRNAs using S-adenosyl-L-methionine as donor of the methyl groups. The polypeptide is tRNA (guanine(26)-N(2))-dimethyltransferase 2 (Arabidopsis thaliana (Mouse-ear cress)).